A 381-amino-acid chain; its full sequence is Succinyl-diaminopimelate desuccinylase (381 aa).

His-68 contributes to the Zn(2+) binding site. The active site involves Asp-70. Position 101 (Asp-101) interacts with Zn(2+). Glu-135 functions as the Proton acceptor in the catalytic mechanism. Zn(2+) contacts are provided by Glu-136, Glu-164, and His-350.

Belongs to the peptidase M20A family. DapE subfamily. As to quaternary structure, homodimer. Zn(2+) is required as a cofactor. Requires Co(2+) as cofactor.

It carries out the reaction N-succinyl-(2S,6S)-2,6-diaminopimelate + H2O = (2S,6S)-2,6-diaminopimelate + succinate. It functions in the pathway amino-acid biosynthesis; L-lysine biosynthesis via DAP pathway; LL-2,6-diaminopimelate from (S)-tetrahydrodipicolinate (succinylase route): step 3/3. Catalyzes the hydrolysis of N-succinyl-L,L-diaminopimelic acid (SDAP), forming succinate and LL-2,6-diaminopimelate (DAP), an intermediate involved in the bacterial biosynthesis of lysine and meso-diaminopimelic acid, an essential component of bacterial cell walls. In Neisseria meningitidis serogroup C (strain 053442), this protein is Succinyl-diaminopimelate desuccinylase.